The sequence spans 509 residues: Histidine--tRNA ligase, cytoplasmic (509 aa).

Alanine 2 is modified (N-acetylalanine). The 57-residue stretch at 3 to 59 folds into the WHEP-TRS domain; it reads ERAALEELVKLQGERVRGLKQQKASAELIEEEVAKLLKLKAQLGPDESKQKFVLKTP. Serine 66 carries the post-translational modification Phosphoserine. L-histidine contacts are provided by residues 130 to 132, arginine 157, glutamine 173, aspartate 177, arginine 326, and 330 to 331; these read DLT and YY. Serine 356 bears the Phosphoserine mark.

Belongs to the class-II aminoacyl-tRNA synthetase family. Homodimer. Brain, heart, liver and kidney.

It localises to the cytoplasm. It catalyses the reaction tRNA(His) + L-histidine + ATP = L-histidyl-tRNA(His) + AMP + diphosphate + H(+). Its function is as follows. Catalyzes the ATP-dependent ligation of histidine to the 3'-end of its cognate tRNA, via the formation of an aminoacyl-adenylate intermediate (His-AMP). Plays a role in axon guidance. The polypeptide is Histidine--tRNA ligase, cytoplasmic (Homo sapiens (Human)).